The primary structure comprises 244 residues: MGQKVNPISNRLGIIRGWDSNWYGGKNYGDTLLEDSKIRKYLNARLAKASVSRIVIERTLKLITITVCTSRPGIIIGKGGQEVDKLKEELKKITDKEVQINIFEVKRPELDAVIVANNIARQLEGKIAYRRAVKMAIASTMRMGAEGIKIQISGRLNGAEMARSEMYKEGRTPLHTLRADIDYALAEALTKVGLLGVKVWICRGEVYGKRDLAPSFTAAKETGRRNDNAGGNRDKNFKRKRANR.

In terms of domain architecture, KH type-2 spans 38–106 (IRKYLNARLA…EVQINIFEVK (69 aa)). Over residues 222–235 (TGRRNDNAGGNRDK) the composition is skewed to basic and acidic residues. The interval 222–244 (TGRRNDNAGGNRDKNFKRKRANR) is disordered.

It belongs to the universal ribosomal protein uS3 family. Part of the 30S ribosomal subunit. Forms a tight complex with proteins S10 and S14.

In terms of biological role, binds the lower part of the 30S subunit head. Binds mRNA in the 70S ribosome, positioning it for translation. This is Small ribosomal subunit protein uS3 from Parabacteroides distasonis (strain ATCC 8503 / DSM 20701 / CIP 104284 / JCM 5825 / NCTC 11152).